Consider the following 83-residue polypeptide: Gas vesicle protein G1 (83 aa).

The protein belongs to the gas vesicle GvpG family. As to quaternary structure, gvpF to GvpM interact with each other in vitro, and may form multi-subunit complex(es). Might interact with GvpA1.

The protein resides in the gas vesicle. In terms of biological role, proteins GvpF to GvpM might be involved in nucleating gas vesicle formation. A minor component of the gas vesicle. Gas vesicles are hollow, gas filled proteinaceous nanostructures found in several microbial planktonic microorganisms. They allow positioning of halobacteria at the optimal depth for growth in the poorly aerated, shallow brine pools of their habitat. Functionally, expression of a 9.5 kb p-vac DNA fragment containing 2 divergently transcribed regions (gvpD-gvpE-gvpF-gvpG-gvpH-gvpI-gvpJ-gvpK-gvpL-gvpM and gvpA-gvpC-gvpN-gvpO) allows H.volcanii to produce gas vesicles. A minimal gas vesicle can be made in H.volcanii by gvpA1-gvpO1 plus gvpF1-gvpG1-gvpJ1-gvpK1-gvpL1-gvpM1; lack of enough GvpJ1 prevents formation. A similar region restores gas vesicle production in H.halobium without the p-vac locus, but it still has the c-vac locus. The chain is Gas vesicle protein G1 (gvpG11) from Halobacterium salinarum (strain ATCC 700922 / JCM 11081 / NRC-1) (Halobacterium halobium).